The following is a 311-amino-acid chain: Methionyl-tRNA formyltransferase (311 aa).

114–117 (SLLP) lines the (6S)-5,6,7,8-tetrahydrofolate pocket.

This sequence belongs to the Fmt family.

The enzyme catalyses L-methionyl-tRNA(fMet) + (6R)-10-formyltetrahydrofolate = N-formyl-L-methionyl-tRNA(fMet) + (6S)-5,6,7,8-tetrahydrofolate + H(+). Attaches a formyl group to the free amino group of methionyl-tRNA(fMet). The formyl group appears to play a dual role in the initiator identity of N-formylmethionyl-tRNA by promoting its recognition by IF2 and preventing the misappropriation of this tRNA by the elongation apparatus. This Corynebacterium diphtheriae (strain ATCC 700971 / NCTC 13129 / Biotype gravis) protein is Methionyl-tRNA formyltransferase.